Reading from the N-terminus, the 413-residue chain is 4-hydroxy-3-methylbut-2-en-1-yl diphosphate synthase (flavodoxin) (413 aa).

Residues C298, C301, C344, and E351 each coordinate [4Fe-4S] cluster.

This sequence belongs to the IspG family. [4Fe-4S] cluster serves as cofactor.

It catalyses the reaction (2E)-4-hydroxy-3-methylbut-2-enyl diphosphate + oxidized [flavodoxin] + H2O + 2 H(+) = 2-C-methyl-D-erythritol 2,4-cyclic diphosphate + reduced [flavodoxin]. The protein operates within isoprenoid biosynthesis; isopentenyl diphosphate biosynthesis via DXP pathway; isopentenyl diphosphate from 1-deoxy-D-xylulose 5-phosphate: step 5/6. In terms of biological role, converts 2C-methyl-D-erythritol 2,4-cyclodiphosphate (ME-2,4cPP) into 1-hydroxy-2-methyl-2-(E)-butenyl 4-diphosphate. The chain is 4-hydroxy-3-methylbut-2-en-1-yl diphosphate synthase (flavodoxin) from Koribacter versatilis (strain Ellin345).